The primary structure comprises 440 residues: Adenylosuccinate lyase (440 aa).

Residues 4–5 (RY), 67–69 (KHD), and 93–94 (TS) contribute to the N(6)-(1,2-dicarboxyethyl)-AMP site. The Proton donor/acceptor role is filled by H141. N(6)-(1,2-dicarboxyethyl)-AMP is bound at residue Q212. S262 acts as the Proton donor/acceptor in catalysis. N(6)-(1,2-dicarboxyethyl)-AMP is bound by residues S263, 268-270 (KRN), N276, and 307-311 (SVERF).

It belongs to the lyase 1 family. Adenylosuccinate lyase subfamily. As to quaternary structure, homotetramer. Residues from neighboring subunits contribute catalytic and substrate-binding residues to each active site.

It catalyses the reaction N(6)-(1,2-dicarboxyethyl)-AMP = fumarate + AMP. The catalysed reaction is (2S)-2-[5-amino-1-(5-phospho-beta-D-ribosyl)imidazole-4-carboxamido]succinate = 5-amino-1-(5-phospho-beta-D-ribosyl)imidazole-4-carboxamide + fumarate. Its pathway is purine metabolism; AMP biosynthesis via de novo pathway; AMP from IMP: step 2/2. It functions in the pathway purine metabolism; IMP biosynthesis via de novo pathway; 5-amino-1-(5-phospho-D-ribosyl)imidazole-4-carboxamide from 5-amino-1-(5-phospho-D-ribosyl)imidazole-4-carboxylate: step 2/2. Its function is as follows. Catalyzes two reactions in de novo purine nucleotide biosynthesis. Catalyzes the breakdown of 5-aminoimidazole- (N-succinylocarboxamide) ribotide (SAICAR or 2-[5-amino-1-(5-phospho-beta-D-ribosyl)imidazole-4-carboxamido]succinate) to 5-aminoimidazole-4-carboxamide ribotide (AICAR or 5-amino-1-(5-phospho-beta-D-ribosyl)imidazole-4-carboxamide) and fumarate, and of adenylosuccinate (ADS or N(6)-(1,2-dicarboxyethyl)-AMP) to adenosine monophosphate (AMP) and fumarate. This chain is Adenylosuccinate lyase (purB), found in Helicobacter pylori (strain J99 / ATCC 700824) (Campylobacter pylori J99).